A 305-amino-acid chain; its full sequence is Acetylglutamate kinase (305 aa).

Substrate is bound by residues 67–68 (GG), Arg89, and Asn190.

This sequence belongs to the acetylglutamate kinase family. ArgB subfamily.

It localises to the cytoplasm. It carries out the reaction N-acetyl-L-glutamate + ATP = N-acetyl-L-glutamyl 5-phosphate + ADP. Its pathway is amino-acid biosynthesis; L-arginine biosynthesis; N(2)-acetyl-L-ornithine from L-glutamate: step 2/4. In terms of biological role, catalyzes the ATP-dependent phosphorylation of N-acetyl-L-glutamate. This chain is Acetylglutamate kinase, found in Bifidobacterium longum subsp. infantis (strain ATCC 15697 / DSM 20088 / JCM 1222 / NCTC 11817 / S12).